A 619-amino-acid polypeptide reads, in one-letter code: Tyrosine-protein kinase ZAP-70 (619 aa).

The SH2 1 domain occupies 10 to 102; it reads FFYGSISRAE…GLPCNLRKPC (93 aa). Positions 103–162 are interdomain A; the sequence is NRPSGLEPQPGVFDCLRDAMVRDYVRQTWKLEGEALEQAIISQAPQVEKLIATTAHERMP. In terms of domain architecture, SH2 2 spans 163 to 254; sequence WYHSSLTREE…GLIYCLKEAC (92 aa). At Y248 the chain carries Phosphotyrosine. The interval 255-337 is interdomain B; it reads PNSSASNASG…KKLFLKRDNL (83 aa). The disordered stretch occupies residues 260–309; sequence SNASGAAAPTLPAHPSTLTHPQRRIDTLNSDGYTPEPARITSPDKPRPMP. A Phosphoserine modification is found at S289. Y292 carries the post-translational modification Phosphotyrosine. Y315 is subject to Phosphotyrosine; by LCK. Y319 carries the post-translational modification Phosphotyrosine. Residues 338-600 form the Protein kinase domain; sequence LIADIELGCG…QRMRACYYSL (263 aa). ATP contacts are provided by residues 345–352 and K369; that span reads GCGNFGSV. Catalysis depends on D461, which acts as the Proton acceptor. 2 positions are modified to phosphotyrosine: Y492 and Y493. K544 participates in a covalent cross-link: Glycyl lysine isopeptide (Lys-Gly) (interchain with G-Cter in ubiquitin). N6-acetyllysine is present on K603.

This sequence belongs to the protein kinase superfamily. Tyr protein kinase family. SYK/ZAP-70 subfamily. As to quaternary structure, interacts with CD247/CD3Z; this interaction docks ZAP70 at the stimulated TCR. Interacts with NFAM1. Interacts with adapter protein SLA; this interaction negatively regulates T-cell receptor signaling. Interacts with FCRL3. Interacts with VAV1. Interacts with CBL; this interaction promotes ubiquitination, internalization and subsequent degradation of CD247/CD3Z. Identified in a complex with CBL and UBE2L3. Interacts with SHB. Interacts with adapter protein SLA2; this interaction negatively regulates T-cell receptor signaling. Interacts with CBLB. Interacts (via SH2 domains) with RHOH; this interaction regulates ZAP70 subcellular localization. Interacts with DEF6. Interacts (ubiquitinated form) with OTUD7B and UBASH3B. Post-translationally, phosphorylated on tyrosine residues upon T-cell antigen receptor (TCR) stimulation. Phosphorylation of Tyr-315 and Tyr-319 are essential for ZAP70 positive function on T-lymphocyte activation whereas Tyr-292 has a negative regulatory role. Within the C-terminal kinase domain, Tyr-492 and Tyr-493 are phosphorylated after TCR induction, Tyr-492 playing a negative regulatory role and Tyr-493 a positive. Tyr-493 is dephosphorylated by PTN22. Ubiquitinated in response to T cell activation. Deubiquitinated by OTUD7B. As to expression, expressed in T- and natural killer cells. Also present in early thymocytes and pro/pre B-cells.

The protein resides in the cytoplasm. It is found in the cell membrane. It carries out the reaction L-tyrosyl-[protein] + ATP = O-phospho-L-tyrosyl-[protein] + ADP + H(+). With respect to regulation, activated by phosphorylation at Tyr-493 in the activation loop. Inhibited by staurosporine. In terms of biological role, tyrosine kinase that plays an essential role in regulation of the adaptive immune response. Regulates motility, adhesion and cytokine expression of mature T-cells, as well as thymocyte development. Also contributes to the development and activation of primary B-lymphocytes. When antigen presenting cells (APC) activate T-cell receptor (TCR), a serie of phosphorylations lead to the recruitment of ZAP70 to the doubly phosphorylated TCR component CD247/CD3Z through ITAM motif at the plasma membrane. This recruitment serves to localization to the stimulated TCR and to relieve its autoinhibited conformation. Release of ZAP70 active conformation is further stabilized by phosphorylation mediated by LCK. Subsequently, ZAP70 phosphorylates at least 2 essential adapter proteins: LAT and LCP2. In turn, a large number of signaling molecules are recruited and ultimately lead to lymphokine production, T-cell proliferation and differentiation. Furthermore, ZAP70 controls cytoskeleton modifications, adhesion and mobility of T-lymphocytes, thus ensuring correct delivery of effectors to the APC. ZAP70 is also required for TCR-CD247/CD3Z internalization and degradation through interaction with the E3 ubiquitin-protein ligase CBL and adapter proteins SLA and SLA2. Thus, ZAP70 regulates both T-cell activation switch on and switch off by modulating TCR expression at the T-cell surface. During thymocyte development, ZAP70 promotes survival and cell-cycle progression of developing thymocytes before positive selection (when cells are still CD4/CD8 double negative). Additionally, ZAP70-dependent signaling pathway may also contribute to primary B-cells formation and activation through B-cell receptor (BCR). This is Tyrosine-protein kinase ZAP-70 (ZAP70) from Homo sapiens (Human).